We begin with the raw amino-acid sequence, 529 residues long: 1,4-beta-D-glucan cellobiohydrolase xynA (529 aa).

The N-terminal stretch at 1 to 25 (MSALNSFNMYKSALILGSLLATAGA) is a signal peptide. The tract at residues 26–456 (QQIGTYTAET…SDIKVGPFNS (431 aa)) is catalytic. N-linked (GlcNAc...) asparagine glycans are attached at residues Asn-70 and Asn-219. Glu-234 (nucleophile) is an active-site residue. Catalysis depends on Glu-239, which acts as the Proton donor. Asn-413 carries an N-linked (GlcNAc...) asparagine glycan. The disordered stretch occupies residues 413 to 438 (NETGTPGAARGSCPTTSGNPKTVESQ). Polar residues predominate over residues 425–438 (CPTTSGNPKTVESQ). Asn-455 is a glycosylation site (N-linked (GlcNAc...) asparagine). The thr-rich linker stretch occupies residues 457-493 (TFSGGTSTGGSTTTTASGTTSTKASTTSTSSTSTGTG). The segment at 460–491 (GGTSTGGSTTTTASGTTSTKASTTSTSSTSTG) is disordered. The 37-residue stretch at 493–529 (GVAAHWGQCGGQGWTGPTTCASGTTCTVVNPYYSQCL) folds into the CBM1 domain. 2 disulfide bridges follow: Cys-501/Cys-518 and Cys-512/Cys-528.

It belongs to the glycosyl hydrolase 7 (cellulase C) family.

It is found in the secreted. The catalysed reaction is Hydrolysis of (1-&gt;4)-beta-D-glucosidic linkages in cellulose and cellotetraose, releasing cellobiose from the non-reducing ends of the chains.. Cellobiose inhibits xynA at high concentrations. Functionally, the biological conversion of cellulose to glucose generally requires three types of hydrolytic enzymes: (1) Endoglucanases which cut internal beta-1,4-glucosidic bonds; (2) Exocellobiohydrolases that cut the disaccharide cellobiose from the non-reducing end of the cellulose polymer chain; (3) Beta-1,4-glucosidases which hydrolyze the cellobiose and other short cello-oligosaccharides to glucose. In Talaromyces funiculosus (Fruitlet core rot fungus), this protein is 1,4-beta-D-glucan cellobiohydrolase xynA (xynA).